The primary structure comprises 184 residues: Ribosome maturation factor RimM (184 aa).

One can recognise a PRC barrel domain in the interval 111–184; it reads DDEFYWVDLI…HIVVDWGLDY (74 aa).

This sequence belongs to the RimM family. Binds ribosomal protein uS19.

Its subcellular location is the cytoplasm. Functionally, an accessory protein needed during the final step in the assembly of 30S ribosomal subunit, possibly for assembly of the head region. Essential for efficient processing of 16S rRNA. May be needed both before and after RbfA during the maturation of 16S rRNA. It has affinity for free ribosomal 30S subunits but not for 70S ribosomes. This chain is Ribosome maturation factor RimM, found in Ralstonia nicotianae (strain ATCC BAA-1114 / GMI1000) (Ralstonia solanacearum).